Consider the following 411-residue polypeptide: Serine hydroxymethyltransferase (411 aa).

(6S)-5,6,7,8-tetrahydrofolate is bound by residues Leu-119 and 123 to 125 (GHL). The residue at position 228 (Lys-228) is an N6-(pyridoxal phosphate)lysine. 351–353 (SPF) contributes to the (6S)-5,6,7,8-tetrahydrofolate binding site.

Belongs to the SHMT family. As to quaternary structure, homodimer. Pyridoxal 5'-phosphate serves as cofactor.

Its subcellular location is the cytoplasm. It carries out the reaction (6R)-5,10-methylene-5,6,7,8-tetrahydrofolate + glycine + H2O = (6S)-5,6,7,8-tetrahydrofolate + L-serine. The protein operates within one-carbon metabolism; tetrahydrofolate interconversion. It participates in amino-acid biosynthesis; glycine biosynthesis; glycine from L-serine: step 1/1. Its function is as follows. Catalyzes the reversible interconversion of serine and glycine with tetrahydrofolate (THF) serving as the one-carbon carrier. This reaction serves as the major source of one-carbon groups required for the biosynthesis of purines, thymidylate, methionine, and other important biomolecules. Also exhibits THF-independent aldolase activity toward beta-hydroxyamino acids, producing glycine and aldehydes, via a retro-aldol mechanism. This is Serine hydroxymethyltransferase from Clostridium botulinum (strain Alaska E43 / Type E3).